Consider the following 432-residue polypeptide: 3-phosphoshikimate 1-carboxyvinyltransferase (432 aa).

3-phosphoshikimate-binding residues include Lys-23, Ser-24, and Arg-28. Lys-23 serves as a coordination point for phosphoenolpyruvate. Residues Gly-95 and Arg-123 each coordinate phosphoenolpyruvate. Ser-166, Gln-168, Asp-315, and Lys-342 together coordinate 3-phosphoshikimate. Gln-168 contacts phosphoenolpyruvate. Asp-315 acts as the Proton acceptor in catalysis. Phosphoenolpyruvate contacts are provided by Arg-346 and Arg-390.

It belongs to the EPSP synthase family. Monomer.

The protein localises to the cytoplasm. It catalyses the reaction 3-phosphoshikimate + phosphoenolpyruvate = 5-O-(1-carboxyvinyl)-3-phosphoshikimate + phosphate. It participates in metabolic intermediate biosynthesis; chorismate biosynthesis; chorismate from D-erythrose 4-phosphate and phosphoenolpyruvate: step 6/7. In terms of biological role, catalyzes the transfer of the enolpyruvyl moiety of phosphoenolpyruvate (PEP) to the 5-hydroxyl of shikimate-3-phosphate (S3P) to produce enolpyruvyl shikimate-3-phosphate and inorganic phosphate. The protein is 3-phosphoshikimate 1-carboxyvinyltransferase of Lactiplantibacillus plantarum (strain ATCC BAA-793 / NCIMB 8826 / WCFS1) (Lactobacillus plantarum).